The following is a 193-amino-acid chain: UPF0215 protein PH0071 (193 aa).

The protein belongs to the UPF0215 family.

The sequence is that of UPF0215 protein PH0071 from Pyrococcus horikoshii (strain ATCC 700860 / DSM 12428 / JCM 9974 / NBRC 100139 / OT-3).